Here is a 284-residue protein sequence, read N- to C-terminus: tRNA (guanine-N(7)-)-methyltransferase (284 aa).

S-adenosyl-L-methionine-binding positions include G102, E125–I126, N160–T161, and C180. D183 is a catalytic residue. An S-adenosyl-L-methionine-binding site is contributed by T258–E260.

This sequence belongs to the class I-like SAM-binding methyltransferase superfamily. TrmB family. Forms a complex with TRM82.

The protein resides in the nucleus. It catalyses the reaction guanosine(46) in tRNA + S-adenosyl-L-methionine = N(7)-methylguanosine(46) in tRNA + S-adenosyl-L-homocysteine. Its pathway is tRNA modification; N(7)-methylguanine-tRNA biosynthesis. Functionally, catalyzes the formation of N(7)-methylguanine at position 46 (m7G46) in tRNA. The sequence is that of tRNA (guanine-N(7)-)-methyltransferase from Podospora anserina (strain S / ATCC MYA-4624 / DSM 980 / FGSC 10383) (Pleurage anserina).